Reading from the N-terminus, the 449-residue chain is UDP-N-acetylmuramoylalanine--D-glutamate ligase (449 aa).

119–125 contacts ATP; sequence GSNGKTT.

Belongs to the MurCDEF family.

The protein localises to the cytoplasm. It catalyses the reaction UDP-N-acetyl-alpha-D-muramoyl-L-alanine + D-glutamate + ATP = UDP-N-acetyl-alpha-D-muramoyl-L-alanyl-D-glutamate + ADP + phosphate + H(+). Its pathway is cell wall biogenesis; peptidoglycan biosynthesis. Functionally, cell wall formation. Catalyzes the addition of glutamate to the nucleotide precursor UDP-N-acetylmuramoyl-L-alanine (UMA). This is UDP-N-acetylmuramoylalanine--D-glutamate ligase from Streptococcus suis (strain 98HAH33).